A 441-amino-acid polypeptide reads, in one-letter code: Ribosomal protein uS12 methylthiotransferase RimO (441 aa).

The MTTase N-terminal domain maps to 8–118 (PKIGFVSLGC…VLEHVHHYTP (111 aa)). Residues Cys-17, Cys-53, Cys-82, Cys-150, Cys-154, and Cys-157 each contribute to the [4Fe-4S] cluster site. In terms of domain architecture, Radical SAM core spans 136–373 (LTPRHYAYLK…MQLQQQISAE (238 aa)). The region spanning 376–441 (QEKVGREILV…DEYDLWGTRV (66 aa)) is the TRAM domain.

This sequence belongs to the methylthiotransferase family. RimO subfamily. Requires [4Fe-4S] cluster as cofactor.

It localises to the cytoplasm. The enzyme catalyses L-aspartate(89)-[ribosomal protein uS12]-hydrogen + (sulfur carrier)-SH + AH2 + 2 S-adenosyl-L-methionine = 3-methylsulfanyl-L-aspartate(89)-[ribosomal protein uS12]-hydrogen + (sulfur carrier)-H + 5'-deoxyadenosine + L-methionine + A + S-adenosyl-L-homocysteine + 2 H(+). Catalyzes the methylthiolation of an aspartic acid residue of ribosomal protein uS12. This Klebsiella pneumoniae subsp. pneumoniae (strain ATCC 700721 / MGH 78578) protein is Ribosomal protein uS12 methylthiotransferase RimO.